We begin with the raw amino-acid sequence, 349 residues long: PDZ and LIM domain protein 2 (349 aa).

One can recognise a PDZ domain in the interval Met1 to Gln84. Disordered stretches follow at residues Ser72–Gly95 and Leu108–Leu147. Composition is skewed to polar residues over residues Asp81–Gln90 and Leu108–Ala121. Residues Ser124, Ser127, Ser129, Ser134, and Ser137 each carry the phosphoserine modification. 2 positions are modified to phosphothreonine: Thr138 and Thr142. 2 positions are modified to phosphoserine: Ser143 and Ser163. Disordered regions lie at residues Ala168–Asp212 and Glu250–Arg272. A compositionally biased stretch (polar residues) spans Gly176–Thr192. 6 positions are modified to phosphoserine: Ser199, Ser204, Ser205, Ser209, Ser210, and Ser263. The span at Ser199–Leu211 shows a compositional bias: low complexity. Positions Ser260–Thr270 are enriched in polar residues. An LIM zinc-binding domain is found at His281–Met341.

In terms of assembly, interacts with alpha-actinins ACTN1 and ACTN4, FLNA and MYH9. Interacts (via LIM zinc-binding domain) with MKRN2. As to expression, highly expressed in cornea and lung. Expressed at intermediate level in sclera and combined tissues of the eye irido-corneal angle. Specifically expressed in the corneal epithelial cells but not in other corneal layers.

Its subcellular location is the cytoplasm. The protein resides in the cytoskeleton. Probable adapter protein located at the actin cytoskeleton that promotes cell attachment. Necessary for the migratory capacity of epithelial cells. Overexpression enhances cell adhesion to collagen and fibronectin and suppresses anchorage independent growth. May contribute to tumor cell migratory capacity. The polypeptide is PDZ and LIM domain protein 2 (Pdlim2) (Rattus norvegicus (Rat)).